The primary structure comprises 459 residues: Cyclooctatin synthase (459 aa).

Residue Cys408 participates in heme binding.

Belongs to the cytochrome P450 family. Requires heme as cofactor.

It carries out the reaction cyclooctat-9-ene-5,7-diol + AH2 + O2 = cyclooctatin + A + H2O. Involved in the biosynthesis of cyclooctatin, a potent inhibitor of lysophospholipase. Catalyzes the hydroxylation of cyclooctat-9-ene-5,7-diol at C-18 to yield the final product, cyclooctatin. This chain is Cyclooctatin synthase, found in Streptomyces melanosporofaciens.